The chain runs to 471 residues: tRNA-2-methylthio-N(6)-dimethylallyladenosine synthase (471 aa).

The region spanning 31 to 149 (LYYHIETYGC…FPQLLWEALN (119 aa)) is the MTTase N-terminal domain. [4Fe-4S] cluster-binding residues include C40, C76, C110, C186, C190, and C193. Residues 172–402 (RDSNLKAWVN…IELQNKISLE (231 aa)) enclose the Radical SAM core domain. Positions 405 to 468 (AELRGKIVEV…AWTMQGELVE (64 aa)) constitute a TRAM domain.

This sequence belongs to the methylthiotransferase family. MiaB subfamily. Monomer. It depends on [4Fe-4S] cluster as a cofactor.

It is found in the cytoplasm. It catalyses the reaction N(6)-dimethylallyladenosine(37) in tRNA + (sulfur carrier)-SH + AH2 + 2 S-adenosyl-L-methionine = 2-methylsulfanyl-N(6)-dimethylallyladenosine(37) in tRNA + (sulfur carrier)-H + 5'-deoxyadenosine + L-methionine + A + S-adenosyl-L-homocysteine + 2 H(+). Catalyzes the methylthiolation of N6-(dimethylallyl)adenosine (i(6)A), leading to the formation of 2-methylthio-N6-(dimethylallyl)adenosine (ms(2)i(6)A) at position 37 in tRNAs that read codons beginning with uridine. This Thermoanaerobacter sp. (strain X514) protein is tRNA-2-methylthio-N(6)-dimethylallyladenosine synthase.